The chain runs to 263 residues: Acyl-[acyl-carrier-protein]--UDP-N-acetylglucosamine O-acyltransferase (263 aa).

It belongs to the transferase hexapeptide repeat family. LpxA subfamily. In terms of assembly, homotrimer.

It is found in the cytoplasm. It carries out the reaction a (3R)-hydroxyacyl-[ACP] + UDP-N-acetyl-alpha-D-glucosamine = a UDP-3-O-[(3R)-3-hydroxyacyl]-N-acetyl-alpha-D-glucosamine + holo-[ACP]. Its pathway is glycolipid biosynthesis; lipid IV(A) biosynthesis; lipid IV(A) from (3R)-3-hydroxytetradecanoyl-[acyl-carrier-protein] and UDP-N-acetyl-alpha-D-glucosamine: step 1/6. Its function is as follows. Involved in the biosynthesis of lipid A, a phosphorylated glycolipid that anchors the lipopolysaccharide to the outer membrane of the cell. The polypeptide is Acyl-[acyl-carrier-protein]--UDP-N-acetylglucosamine O-acyltransferase (Xanthomonas campestris pv. campestris (strain 8004)).